The primary structure comprises 97 residues: Meromycolate extension acyl carrier protein (97 aa).

The Carrier domain occupies 3 to 81 (ASQQEIIAGL…DVVAYIQKLE (79 aa)). Ser41 bears the O-(pantetheine 4'-phosphoryl)serine mark.

Belongs to the acyl carrier protein (ACP) family. 4'-phosphopantetheine is transferred from CoA to a specific serine of apo-AcpM.

It is found in the cytoplasm. Its function is as follows. Acyl carrier protein involved in meromycolate extension. The polypeptide is Meromycolate extension acyl carrier protein (acpM) (Mycolicibacterium aurum (Mycobacterium aurum)).